Here is a 387-residue protein sequence, read N- to C-terminus: MVRCSCVLFRKYGNFIDNLRLFTKGGSGGMGYPRLGGEGGKGGDVWVVAHNRMTLKQLKDKYPQKRFVAGEGANSRVSALKGSKGKDCEIPVPVGVSVTDENGKIIGELNKEKDRLLVAEGGLGGKLLTNFLPLKGQKRVIHLDLKLIADIGLVGFPNAGKSSLLSKISHAKPAIADYAFTTIKPELGKIMYSDFKQISVADLPGLIEGAHMNKGMGHKFLKHIERTKQLLFVVDISGFQLSSQTHYRTAFETIILLSKELELYKEELHTKPALLAVNKMDLPDAQGKFHVLMNQLQNPKEFFHLFEKNMIPERTVEFQHIIPISAITGEGIDELKNCIRKSLDEHTNQENDAYHKKQLLNLHISNTVSYSEPPSKTAVSSPRMDIT.

The region spanning 13 to 148 (GNFIDNLRLF…RVIHLDLKLI (136 aa)) is the Obg domain. One can recognise an OBG-type G domain in the interval 149-344 (ADIGLVGFPN…LKNCIRKSLD (196 aa)). GTP contacts are provided by residues 155–162 (GFPNAGKS), 202–206 (DLPGL), and 278–281 (NKMD).

This sequence belongs to the TRAFAC class OBG-HflX-like GTPase superfamily. OBG GTPase family.

The protein resides in the nucleus. It localises to the nucleolus. Functionally, may be involved in the ribosome maturation process. This Bos taurus (Bovine) protein is GTP-binding protein 10 (GTPBP10).